The sequence spans 730 residues: Elongation factor 2 (730 aa).

The 242-residue stretch at 19–260 (DRIRNIGIVA…MVVKHLPNPL (242 aa)) folds into the tr-type G domain. Residues 28–35 (AHIDHGKT), 94–98 (DTPGH), and 148–151 (NKVD) contribute to the GTP site. Diphthamide is present on histidine 597.

This sequence belongs to the TRAFAC class translation factor GTPase superfamily. Classic translation factor GTPase family. EF-G/EF-2 subfamily.

It is found in the cytoplasm. Its function is as follows. Catalyzes the GTP-dependent ribosomal translocation step during translation elongation. During this step, the ribosome changes from the pre-translocational (PRE) to the post-translocational (POST) state as the newly formed A-site-bound peptidyl-tRNA and P-site-bound deacylated tRNA move to the P and E sites, respectively. Catalyzes the coordinated movement of the two tRNA molecules, the mRNA and conformational changes in the ribosome. This is Elongation factor 2 from Methanoculleus marisnigri (strain ATCC 35101 / DSM 1498 / JR1).